Reading from the N-terminus, the 174-residue chain is NADH-quinone oxidoreductase subunit B 2 (174 aa).

[4Fe-4S] cluster is bound by residues C53, C54, C118, and C148.

Belongs to the complex I 20 kDa subunit family. NDH-1 is composed of 14 different subunits. Subunits NuoB, C, D, E, F, and G constitute the peripheral sector of the complex. It depends on [4Fe-4S] cluster as a cofactor.

It is found in the cell inner membrane. The catalysed reaction is a quinone + NADH + 5 H(+)(in) = a quinol + NAD(+) + 4 H(+)(out). Its function is as follows. NDH-1 shuttles electrons from NADH, via FMN and iron-sulfur (Fe-S) centers, to quinones in the respiratory chain. Couples the redox reaction to proton translocation (for every two electrons transferred, four hydrogen ions are translocated across the cytoplasmic membrane), and thus conserves the redox energy in a proton gradient. This chain is NADH-quinone oxidoreductase subunit B 2, found in Cereibacter sphaeroides (strain ATCC 17025 / ATH 2.4.3) (Rhodobacter sphaeroides).